A 506-amino-acid chain; its full sequence is NAD(P)H-quinone oxidoreductase chain 4, chloroplastic (506 aa).

Transmembrane regions (helical) follow at residues 5–25, 35–55, 88–108, 114–134, 135–155, 168–188, 209–229, 243–263, 275–295, 309–329, 331–351, 386–406, 415–435, and 463–483; these read FPLL…IPFL, WYTL…FIYK, MPLI…AWPI, LFYF…LSQD, ILLF…LLSL, FILY…TMAF, ALEI…LPAF, HYST…YGLI, VIFS…GALT, SSIS…DLGL, GAMM…FLAG, SLAL…LGFL, FIAL…IYLL, and IFIM…PNLT.

This sequence belongs to the complex I subunit 4 family.

It localises to the plastid. The protein localises to the chloroplast thylakoid membrane. The catalysed reaction is a plastoquinone + NADH + (n+1) H(+)(in) = a plastoquinol + NAD(+) + n H(+)(out). The enzyme catalyses a plastoquinone + NADPH + (n+1) H(+)(in) = a plastoquinol + NADP(+) + n H(+)(out). This Chaetosphaeridium globosum (Charophycean green alga) protein is NAD(P)H-quinone oxidoreductase chain 4, chloroplastic.